A 75-amino-acid polypeptide reads, in one-letter code: uncharacterized protein (75 aa).

Transmembrane regions (helical) follow at residues 7–26 (LINAVFRIACGLTIMSAASA) and 36–58 (MHLFYIFMGAMKAGSGILRFCPV).

It is found in the cell membrane. This is an uncharacterized protein from Bacillus subtilis (strain 168).